Here is a 291-residue protein sequence, read N- to C-terminus: Sulfate transport system permease protein CysW (291 aa).

The Cytoplasmic segment spans residues 1–22 (MAEVTQLKRYDARPINWGKWFL). The chain crosses the membrane as a helical span at residues 23-43 (IGIGMLVSAFILLVPMIYIFV). At 44-69 (QAFSKGLMPVLQNLADPDMLHAIWLT) the chain is on the periplasmic side. The ABC transmembrane type-1 domain occupies 66–270 (IWLTVMIALI…MAIITLFLKS (205 aa)). The chain crosses the membrane as a helical span at residues 70–90 (VMIALIAVPVNLVFGILLAWL). Residues 91–104 (VTRFNFPGRQLLLT) are Cytoplasmic-facing. The chain crosses the membrane as a helical span at residues 105–125 (LLDIPFAVSPVVAGLVYLLFY). Topologically, residues 126-141 (GSNGPLGGWLDEHNLQ) are periplasmic. Residues 142–162 (IMFSWPGMVLVTIFVTCPFVV) traverse the membrane as a helical segment. The Cytoplasmic segment spans residues 163-200 (RELVPVMLSQGSQEDEAAILLGASGWQMFRRVTLPNIR). A helical transmembrane segment spans residues 201–221 (WALLYGVVLTNARAIGEFGAV). The Periplasmic segment spans residues 222-247 (SVVSGSIRGETLSLPLQIELLEQDYN). The chain crosses the membrane as a helical span at residues 248 to 268 (TVGSFTAAALLTLMAIITLFL). The Cytoplasmic portion of the chain corresponds to 269–291 (KSMLQWRLENQEKRAQQEEHHEH).

Belongs to the binding-protein-dependent transport system permease family. CysTW subfamily. The complex is composed of two ATP-binding proteins (CysA), two transmembrane proteins (CysT and CysW) and a solute-binding protein (CysP).

The protein resides in the cell inner membrane. Part of the ABC transporter complex CysAWTP (TC 3.A.1.6.1) involved in sulfate/thiosulfate import. Probably responsible for the translocation of the substrate across the membrane. In Escherichia coli O6:H1 (strain CFT073 / ATCC 700928 / UPEC), this protein is Sulfate transport system permease protein CysW (cysW).